Consider the following 301-residue polypeptide: DNA repair protein RecO (301 aa).

Positions 272–301 are disordered; sequence PTPSGQGSPVAAAAFSEEDSETLGSNLKKL.

This sequence belongs to the RecO family.

Involved in DNA repair and RecF pathway recombination. This Synechococcus sp. (strain JA-3-3Ab) (Cyanobacteria bacterium Yellowstone A-Prime) protein is DNA repair protein RecO.